We begin with the raw amino-acid sequence, 536 residues long: Chaperonin GroEL 2 (536 aa).

ATP-binding positions include 29–32 (TLGP), 86–90 (DGTTT), G412, and D495.

The protein belongs to the chaperonin (HSP60) family. In terms of assembly, forms a cylinder of 14 subunits composed of two heptameric rings stacked back-to-back. Interacts with the co-chaperonin GroES.

The protein resides in the cytoplasm. The enzyme catalyses ATP + H2O + a folded polypeptide = ADP + phosphate + an unfolded polypeptide.. In terms of biological role, together with its co-chaperonin GroES, plays an essential role in assisting protein folding. The GroEL-GroES system forms a nano-cage that allows encapsulation of the non-native substrate proteins and provides a physical environment optimized to promote and accelerate protein folding. This chain is Chaperonin GroEL 2, found in Arthrobacter sp. (strain FB24).